The following is a 525-amino-acid chain: Serine/threonine-protein kinase YPK3 (525 aa).

Residues S90 and S105 each carry the phosphoserine modification. The residue at position 107 (T107) is a Phosphothreonine. Residues 128–424 form the Protein kinase domain; the sequence is FKPVRVLGQG…KTGANNKPTK (297 aa). Residues 134–142 and K157 each bind ATP; that span reads LGQGAYGKV. The disordered stretch occupies residues 170 to 193; that stretch reads ATDSKREDEDKNDGNNNDNDDGLS. Residues 172–182 are compositionally biased toward basic and acidic residues; sequence DSKREDEDKND. The Proton acceptor role is filled by D277. S321 carries the post-translational modification Phosphoserine; by PKH1 or PKH2. Residues 445–524 form the AGC-kinase C-terminal domain; that stretch reads RKIDWKLLES…KASGSYLEKY (80 aa). The residue at position 490 (T490) is a Phosphothreonine; by TORC1. At S513 the chain carries Phosphoserine; by TORC1.

This sequence belongs to the protein kinase superfamily. AGC Ser/Thr protein kinase family. S6 kinase subfamily. Post-translationally, phosphorylated by PKA in a TORC1-dependent manner. Phosphorylation at PKA consensus sites RRxS/T decreases upon rapamycin treatment.

The protein resides in the cytoplasm. The catalysed reaction is L-seryl-[protein] + ATP = O-phospho-L-seryl-[protein] + ADP + H(+). It carries out the reaction L-threonyl-[protein] + ATP = O-phospho-L-threonyl-[protein] + ADP + H(+). In terms of biological role, AGC kinase which plays a role in TOR complex 1 (TORC1) signaling pathway which mediates temporal control of cell growth in response to nutrients. Required for phosphorylation of ribosomal protein S6 (RPS6A/RPS6B) at 'Ser-232' and 'Ser-233'. This is Serine/threonine-protein kinase YPK3 from Saccharomyces cerevisiae (strain ATCC 204508 / S288c) (Baker's yeast).